Here is a 262-residue protein sequence, read N- to C-terminus: Sulfite reductase, dissimilatory-type subunit beta (262 aa).

[4Fe-4S] cluster is bound by residues Cys-151, Cys-188, Cys-189, Cys-193, Cys-231, Cys-258, and Cys-261. Cys-193 is a siroheme binding site.

As to quaternary structure, heterohexamer of two alpha, two beta and two gamma subunits. The cofactor is [4Fe-4S] cluster. Siroheme serves as cofactor.

It catalyses the reaction [DsrC protein]-trisulfide + NAD(+) + 3 H2O = [DsrC protein]-dithiol + sulfite + NADH + 3 H(+). Catalyzes the reduction of sulfite to sulfide. This is the terminal oxidation reaction in sulfate respiration, a process catalyzed by the sulfate-reducing bacteria. The chain is Sulfite reductase, dissimilatory-type subunit beta (dsrB) from Megalodesulfovibrio gigas (strain ATCC 19364 / DSM 1382 / NCIMB 9332 / VKM B-1759) (Desulfovibrio gigas).